Here is a 270-residue protein sequence, read N- to C-terminus: Type II restriction enzyme CeqI (270 aa).

The catalysed reaction is Endonucleolytic cleavage of DNA to give specific double-stranded fragments with terminal 5'-phosphates.. A P subtype restriction enzyme that recognizes the double-stranded sequence 5'-GATATC-3' and cleaves after T-3. This Rhodococcus hoagii (Corynebacterium equii) protein is Type II restriction enzyme CeqI (ceqIR).